A 217-amino-acid chain; its full sequence is ATP phosphoribosyltransferase (217 aa).

The protein belongs to the ATP phosphoribosyltransferase family. Short subfamily. Heteromultimer composed of HisG and HisZ subunits.

It is found in the cytoplasm. The catalysed reaction is 1-(5-phospho-beta-D-ribosyl)-ATP + diphosphate = 5-phospho-alpha-D-ribose 1-diphosphate + ATP. The protein operates within amino-acid biosynthesis; L-histidine biosynthesis; L-histidine from 5-phospho-alpha-D-ribose 1-diphosphate: step 1/9. Its function is as follows. Catalyzes the condensation of ATP and 5-phosphoribose 1-diphosphate to form N'-(5'-phosphoribosyl)-ATP (PR-ATP). Has a crucial role in the pathway because the rate of histidine biosynthesis seems to be controlled primarily by regulation of HisG enzymatic activity. The sequence is that of ATP phosphoribosyltransferase from Prochlorococcus marinus (strain MIT 9313).